Reading from the N-terminus, the 184-residue chain is Guanylate kinase (184 aa).

The Guanylate kinase-like domain maps to 5–183 (NGLIVITGPS…ALLEIKKLIK (179 aa)). Residue 12–19 (GPSGVGKG) participates in ATP binding.

Belongs to the guanylate kinase family.

It localises to the cytoplasm. It carries out the reaction GMP + ATP = GDP + ADP. Its function is as follows. Essential for recycling GMP and indirectly, cGMP. This chain is Guanylate kinase, found in Prochlorococcus marinus (strain SARG / CCMP1375 / SS120).